Consider the following 338-residue polypeptide: Probable tRNA pseudouridine synthase B (338 aa).

Residue Asp78 is the Nucleophile of the active site. The PUA domain maps to 245-320; sequence LPKIILRDSA…LAATSVRIMM (76 aa).

This sequence belongs to the pseudouridine synthase TruB family. Type 2 subfamily.

The enzyme catalyses uridine(55) in tRNA = pseudouridine(55) in tRNA. Its function is as follows. Could be responsible for synthesis of pseudouridine from uracil-55 in the psi GC loop of transfer RNAs. This Methanosarcina barkeri (strain Fusaro / DSM 804) protein is Probable tRNA pseudouridine synthase B.